Here is a 245-residue protein sequence, read N- to C-terminus: Adenosylcobinamide-GDP ribazoletransferase (245 aa).

5 helical membrane-spanning segments follow: residues 31–51 (FGRA…VLYG), 61–81 (PLLQ…ALHL), 113–133 (AAVV…AALL), 138–158 (PGLL…LFLT), and 192–212 (LAFG…FAWL).

Belongs to the CobS family. Requires Mg(2+) as cofactor.

It localises to the cell inner membrane. The enzyme catalyses alpha-ribazole + adenosylcob(III)inamide-GDP = adenosylcob(III)alamin + GMP + H(+). It catalyses the reaction alpha-ribazole 5'-phosphate + adenosylcob(III)inamide-GDP = adenosylcob(III)alamin 5'-phosphate + GMP + H(+). It functions in the pathway cofactor biosynthesis; adenosylcobalamin biosynthesis; adenosylcobalamin from cob(II)yrinate a,c-diamide: step 7/7. Its function is as follows. Joins adenosylcobinamide-GDP and alpha-ribazole to generate adenosylcobalamin (Ado-cobalamin). Also synthesizes adenosylcobalamin 5'-phosphate from adenosylcobinamide-GDP and alpha-ribazole 5'-phosphate. This Pseudomonas paraeruginosa (strain DSM 24068 / PA7) (Pseudomonas aeruginosa (strain PA7)) protein is Adenosylcobinamide-GDP ribazoletransferase.